The following is a 362-amino-acid chain: Beta-ketoacyl-[acyl-carrier-protein] synthase III 2 (362 aa).

Residues C113 and H251 contribute to the active site. The ACP-binding stretch occupies residues 252-256 (QANIR). Residue N281 is part of the active site.

Belongs to the thiolase-like superfamily. FabH family. As to quaternary structure, homodimer.

The protein resides in the cytoplasm. The catalysed reaction is malonyl-[ACP] + acetyl-CoA + H(+) = 3-oxobutanoyl-[ACP] + CO2 + CoA. It functions in the pathway lipid metabolism; fatty acid biosynthesis. Its function is as follows. Catalyzes the condensation reaction of fatty acid synthesis by the addition to an acyl acceptor of two carbons from malonyl-ACP. Catalyzes the first condensation reaction which initiates fatty acid synthesis and may therefore play a role in governing the total rate of fatty acid production. Possesses both acetoacetyl-ACP synthase and acetyl transacylase activities. Its substrate specificity determines the biosynthesis of branched-chain and/or straight-chain of fatty acids. This Vibrio vulnificus (strain CMCP6) protein is Beta-ketoacyl-[acyl-carrier-protein] synthase III 2.